The primary structure comprises 503 residues: ATP synthase subunit alpha (503 aa).

170 to 177 (GDKQTGKT) lines the ATP pocket.

This sequence belongs to the ATPase alpha/beta chains family. In terms of assembly, F-type ATPases have 2 components, CF(1) - the catalytic core - and CF(0) - the membrane proton channel. CF(1) has five subunits: alpha(3), beta(3), gamma(1), delta(1), epsilon(1). CF(0) has three main subunits: a(1), b(2) and c(9-12). The alpha and beta chains form an alternating ring which encloses part of the gamma chain. CF(1) is attached to CF(0) by a central stalk formed by the gamma and epsilon chains, while a peripheral stalk is formed by the delta and b chains.

Its subcellular location is the cell inner membrane. The enzyme catalyses ATP + H2O + 4 H(+)(in) = ADP + phosphate + 5 H(+)(out). Produces ATP from ADP in the presence of a proton gradient across the membrane. The alpha chain is a regulatory subunit. In Helicobacter pylori (strain G27), this protein is ATP synthase subunit alpha.